A 413-amino-acid polypeptide reads, in one-letter code: uncharacterized protein (413 aa).

Positions 1–22 are cleaved as a signal peptide; it reads MKKSKASALLWLFSLVGFMLHA.

Its subcellular location is the periplasm. Functionally, may be involved in ulvan degradation. Ulvan is the main polysaccharide component of the Ulvales (green seaweed) cell wall. It is composed of disaccharide building blocks comprising 3-sulfated rhamnose (Rha3S) linked to D-glucuronic acid (GlcA), L-iduronic acid (IduA), or D-xylose (Xyl). This is an uncharacterized protein from Formosa agariphila (strain DSM 15362 / KCTC 12365 / LMG 23005 / KMM 3901 / M-2Alg 35-1).